The primary structure comprises 352 residues: Photosystem II D2 protein (352 aa).

A helical transmembrane segment spans residues C40–T60. Residue H117 participates in chlorophyll a binding. Residues G124 to P140 form a helical membrane-spanning segment. Pheophytin a-binding residues include Q129 and N142. A helical transmembrane segment spans residues V152–S165. Residue H197 coordinates chlorophyll a. The helical transmembrane segment at G207–D227 threads the bilayer. Residues H214 and F261 each coordinate a plastoquinone. H214 provides a ligand contact to Fe cation. H268 is a binding site for Fe cation. Residues G278–R294 form a helical membrane-spanning segment.

It belongs to the reaction center PufL/M/PsbA/D family. As to quaternary structure, PSII is composed of 1 copy each of membrane proteins PsbA, PsbB, PsbC, PsbD, PsbE, PsbF, PsbH, PsbI, PsbJ, PsbK, PsbL, PsbM, PsbT, PsbX, PsbY, PsbZ, Psb30/Ycf12, peripheral proteins PsbO, CyanoQ (PsbQ), PsbU, PsbV and a large number of cofactors. It forms dimeric complexes. The D1/D2 heterodimer binds P680, chlorophylls that are the primary electron donor of PSII, and subsequent electron acceptors. It shares a non-heme iron and each subunit binds pheophytin, quinone, additional chlorophylls, carotenoids and lipids. There is also a Cl(-1) ion associated with D1 and D2, which is required for oxygen evolution. The PSII complex binds additional chlorophylls, carotenoids and specific lipids. is required as a cofactor.

The protein localises to the cellular thylakoid membrane. The enzyme catalyses 2 a plastoquinone + 4 hnu + 2 H2O = 2 a plastoquinol + O2. Photosystem II (PSII) is a light-driven water:plastoquinone oxidoreductase that uses light energy to abstract electrons from H(2)O, generating O(2) and a proton gradient subsequently used for ATP formation. It consists of a core antenna complex that captures photons, and an electron transfer chain that converts photonic excitation into a charge separation. The D1/D2 (PsbA/PsbD) reaction center heterodimer binds P680, the primary electron donor of PSII as well as several subsequent electron acceptors. D2 is needed for assembly of a stable PSII complex. The chain is Photosystem II D2 protein from Picosynechococcus sp. (strain ATCC 27264 / PCC 7002 / PR-6) (Agmenellum quadruplicatum).